An 84-amino-acid polypeptide reads, in one-letter code: Omega-theraphotoxin-Pm1a (84 aa).

The N-terminal stretch at methionine 1 to alanine 21 is a signal peptide. The propeptide occupies threonine 22–arginine 45. Intrachain disulfides connect cysteine 52-cysteine 66, cysteine 59-cysteine 71, and cysteine 65-cysteine 78.

Belongs to the neurotoxin 10 (Hwtx-1) family. 41 (Jztx-36) subfamily. As to expression, expressed by the venom gland.

Its subcellular location is the secreted. Its function is as follows. Omega-conotoxins act at presynaptic membranes, they bind and block voltage-gated calcium channels (Cav). This toxin inhibits barium currents (IBa) mediated by L-type voltage-gated calcium channels Cav1.2/CACNA1C (IC(50)=825 nM) and Cav1.3/CACNA1C (IC(50)=2240 nM). The sequence is that of Omega-theraphotoxin-Pm1a from Pelinobius muticus (King baboon spider).